Reading from the N-terminus, the 151-residue chain is ALK and LTK ligand 2 (151 aa).

The signal sequence occupies residues 1 to 25 (MRVSGRPMLLALLLLLSTVGDPGHA). 2 cysteine pairs are disulfide-bonded: C112–C148 and C126–C135.

This sequence belongs to the ALKAL family. In terms of assembly, homodimer.

It localises to the secreted. The protein resides in the cell membrane. In terms of biological role, cytokine that acts as a physiological ligand for receptor tyrosine kinases LTK and ALK, leading to their activation. Cytokine-binding is sufficient to activate LTK. In contrast, ALKAL2-driven activation of ALK is coupled with heparin-binding to ALK. Stimulation of ALK signaling is involved in neural development and regulation of energy expenditure. The sequence is that of ALK and LTK ligand 2 from Rattus norvegicus (Rat).